The chain runs to 337 residues: UPF0252 protein PH1321 (337 aa).

The chain crosses the membrane as a helical span at residues 100 to 120 (IIGMLFLVFIILPAITSNLWS).

The protein belongs to the UPF0252 family.

It is found in the membrane. The sequence is that of UPF0252 protein PH1321 from Pyrococcus horikoshii (strain ATCC 700860 / DSM 12428 / JCM 9974 / NBRC 100139 / OT-3).